A 215-amino-acid chain; its full sequence is uncharacterized protein (215 aa).

Residues serine 114, aspartate 162, and histidine 194 each act as charge relay system in the active site.

It belongs to the AB hydrolase superfamily. AB hydrolase 2 family.

This is an uncharacterized protein from Rickettsia prowazekii (strain Madrid E).